The primary structure comprises 435 residues: GPI-anchor transamidase component PIGU (435 aa).

Over 1–3 (MAA) the chain is Cytoplasmic. Residues 4-22 (PLALVLVVAVTVRAALFRS) traverse the membrane as a helical segment. Residues 23–78 (SLAEFISERVEVVSPLSSWKRVVEGLSLLDLGVSPYSGAVFHETPLIIYLFHFLID) lie on the Lumenal side of the membrane. Residues 79–99 (YAELVFMITDALTAIALYFAI) traverse the membrane as a helical segment. At 100 to 136 (QDFNKVVFKKQKLLLELDQYAPDVAELIRTPMEMRYI) the chain is on the cytoplasmic side. The next 4 helical transmembrane spans lie at 137-158 (PLKV…VAKS), 159-178 (TCAI…IKGS), 179-194 (VFLS…YQTL), and 195-205 (YPVTLFAPGLL). Topologically, residues 206-222 (YLLQRQYIPVKVKSKAF) are cytoplasmic. Position 216 (Lys216) interacts with a cardiolipin. A helical membrane pass occupies residues 223–244 (WIFSWEYAMMYIGSLVVIVCLS). The Lumenal segment spans residues 245-286 (FFLLSSWDFIPAVYGFILSVPDLTPNIGLFWYFFAEMFEHFS). Residues 287 to 306 (LFFVCVFQINVFFYTVPLAI) traverse the membrane as a helical segment. Residues 307 to 311 (KLKEH) are Cytoplasmic-facing. A cardiolipin is bound at residue Lys309. A run of 2 helical transmembrane segments spans residues 312 to 331 (PIFF…SYPT) and 332 to 345 (VGDV…FPVW). Residues 346–354 (NHLYRFLRN) lie on the Cytoplasmic side of the membrane. The chain crosses the membrane as a helical span at residues 355–372 (VFVLTCIIVVCSLLFPVL). At 373–384 (WHLWIYAGSANS) the chain is on the lumenal side. Asn383 and Asn385 together coordinate a 2-acyl-6-[6-phosphoethanolamine-alpha-D-mannosyl-(1-&gt;2)-6-phosphoethanolamine-alpha-D-mannosyl-(1-&gt;6)-2-phosphoethanolamine-alpha-D-mannosyl-(1-&gt;4)-alpha-D-glucosaminyl]-1-(1-radyl,2-acyl-sn-glycero-3-phospho)-1D-myo-inositol. Residues 385-406 (NFFYAITLTFNVGQILLISDYF) traverse the membrane as a helical segment. At 407–435 (YAFLRREYYLTHGLYLTAKDGTEAMLVLK) the chain is on the cytoplasmic side.

It belongs to the PIGU family. As to quaternary structure, heteropentamer. Part of the GPI-anchor transamidase complex, consisting of PIGK, PIGT, PIGS, PIGU and GAA1.

Its subcellular location is the endoplasmic reticulum membrane. The protein operates within glycolipid biosynthesis; glycosylphosphatidylinositol-anchor biosynthesis. In terms of biological role, component of the glycosylphosphatidylinositol-anchor (GPI-anchor) transamidase (GPI-T) complex that catalyzes the formation of the linkage between a proprotein and a GPI-anchor and participates in GPI anchored protein biosynthesis. Binds the lipid portion of GPI-anchor. May act as an organizer in the transmembrane layer to recruit other subunits, and thus is essential for assembly of the complex. In Cricetulus griseus (Chinese hamster), this protein is GPI-anchor transamidase component PIGU.